The chain runs to 862 residues: Probable disease resistance protein At5g43740 (862 aa).

The stretch at 24-61 (RNYIHMMESNLDALQKTMEELKNGRDDLLGRVSIEEDK) forms a coiled coil. The NB-ARC domain maps to 135–438 (MVAQEIIHKV…CEGFINPNRY (304 aa)). 178-185 (GMGGVGKT) contacts ATP. LRR repeat units lie at residues 511 to 532 (IVRT…SKCP), 533 to 555 (NLST…FFRF), 558 to 580 (KLVV…ISNL), and 582 to 604 (SLQY…KKLR).

This sequence belongs to the disease resistance NB-LRR family.

Its function is as follows. Probable disease resistance protein. This is Probable disease resistance protein At5g43740 from Arabidopsis thaliana (Mouse-ear cress).